A 309-amino-acid chain; its full sequence is Olfactory receptor 5AC2 (309 aa).

Topologically, residues 1 to 27 (MDISEGNKTLVTEFVLTGLTDRPWLHV) are extracellular. Residue asparagine 7 is glycosylated (N-linked (GlcNAc...) asparagine). Residues 28-48 (LFFVVFLVVYLITMVGNLGLI) traverse the membrane as a helical segment. The Cytoplasmic portion of the chain corresponds to 49–56 (VLIWNDPH). A helical transmembrane segment spans residues 57 to 77 (LHMPMYLFLGGLAFSDACTST). Residues 78-101 (SITPRMLVNFLDKTAMISLAECIT) lie on the Extracellular side of the membrane. Cysteine 99 and cysteine 191 are oxidised to a cystine. A helical membrane pass occupies residues 102 to 122 (QFYFFASSATTECFLLVMMAY). Over 123-135 (DRYVAICNPLLYP) the chain is Cytoplasmic. The helical transmembrane segment at 136–156 (VMMSNKLSAQLLSISYVIGFL) threads the bilayer. Residues 157-198 (HPLVHVSLLLRLTFCRFNIIHYFYCEILQLFKISCNGPSINA) are Extracellular-facing. Residues 199-219 (LMIFIFGAFIQIPTLMTIIIS) traverse the membrane as a helical segment. Residues 220–239 (YTRVLFDILKKKSEKGRSKA) lie on the Cytoplasmic side of the membrane. A helical transmembrane segment spans residues 240–260 (FSTCGAHLLSVSLYYGTLIFM). Residues 261–273 (YVRPASGLAEDQD) lie on the Extracellular side of the membrane. The helical transmembrane segment at 274–294 (KVYSLFYTIIIPLLNPFIYSL) threads the bilayer. Residues 295 to 309 (RNKKVMHALRRVIRK) lie on the Cytoplasmic side of the membrane.

It belongs to the G-protein coupled receptor 1 family.

The protein localises to the cell membrane. Its function is as follows. Odorant receptor. This is Olfactory receptor 5AC2 (OR5AC2) from Homo sapiens (Human).